The following is a 151-amino-acid chain: UPF0178 protein Shal_3046 (151 aa).

The protein belongs to the UPF0178 family.

The chain is UPF0178 protein Shal_3046 from Shewanella halifaxensis (strain HAW-EB4).